The sequence spans 184 residues: UPF0398 protein OB1025 (184 aa).

It belongs to the UPF0398 family.

The protein is UPF0398 protein OB1025 of Oceanobacillus iheyensis (strain DSM 14371 / CIP 107618 / JCM 11309 / KCTC 3954 / HTE831).